The chain runs to 105 residues: ESAT-6-like protein EsxU (105 aa).

It belongs to the WXG100 family. CFP-10 subfamily. In terms of assembly, forms a tight 1:1 complex with EsxT. Complex formation results in induction of alpha-helical conformation and stability against chemical denaturation.

The protein resides in the secreted. In Mycobacterium tuberculosis (strain ATCC 25618 / H37Rv), this protein is ESAT-6-like protein EsxU.